Reading from the N-terminus, the 392-residue chain is NDP-glycosyltransferase YjiC (392 aa).

Residues Asn18, Thr229, Ser255, Val278, His293, and 297–301 (NSTME) each bind UDP.

This sequence belongs to the UDP-glycosyltransferase family. In terms of assembly, monomer.

The catalysed reaction is an NDP-glycose + an acceptor = a glycosylated acceptor + NDP.. Activity is improved in the presence of Mn(2+), Mg(2+) and Ca(2+), and inhibited by Ni(2+), Zn(2+) and Cu(2+). Glycosyltransferase that can glycosylate a wide range of substrates, including various flavonoids, phenyl ketones, curcuminoid, lignins, zingerone, triterpenes, stilbene and anthraquinone, using UDP-glucose or ADP-glucose as sugar donor. It also exhibits O-, N- and S-glycosylation activities towards simple aromatics. In vivo, the broad acceptor tolerance of YjiC might function as a detoxification agent against exogenous xenobiotics to make the strain adaptable to the changeable environment. This chain is NDP-glycosyltransferase YjiC (yjiC), found in Bacillus subtilis (strain 168).